The chain runs to 187 residues: RNA pyrophosphohydrolase (187 aa).

Positions 6 to 149 (GYRANVGIIL…KRQVYRQALT (144 aa)) constitute a Nudix hydrolase domain. The Nudix box motif lies at 38 to 59 (GGIKSGETPTEAMYRELAEETG). Residues 166-187 (AYREPLEPVEKNRKKSSDTRQS) form a disordered region.

The protein belongs to the Nudix hydrolase family. RppH subfamily. Requires a divalent metal cation as cofactor.

Accelerates the degradation of transcripts by removing pyrophosphate from the 5'-end of triphosphorylated RNA, leading to a more labile monophosphorylated state that can stimulate subsequent ribonuclease cleavage. The protein is RNA pyrophosphohydrolase of Nitrosomonas europaea (strain ATCC 19718 / CIP 103999 / KCTC 2705 / NBRC 14298).